The chain runs to 363 residues: Endopolygalacturonase B (363 aa).

Residues 1 to 20 (MQLLQSSVIAATVGAALVAA) form the signal peptide. Positions 21–28 (VPVELKAR) are excised as a propeptide. C31 and C46 are oxidised to a cystine. PbH1 repeat units lie at residues 158-187 (SDNL…DVGS), 188-209 (STYI…AINS), 210-230 (GSHI…SIGS), 239-260 (VEDV…RIKT), 268-290 (VSNV…IVEQ), and 302-347 (TNGI…SITG). N162 is a glycosylation site (N-linked (GlcNAc...) asparagine). D202 serves as the catalytic Proton donor. C204 and C220 are joined by a disulfide. The active site involves H224. Intrachain disulfides connect C330–C335 and C354–C363. A glycan (N-linked (GlcNAc...) asparagine) is linked at N356.

The protein belongs to the glycosyl hydrolase 28 family.

It localises to the secreted. It carries out the reaction (1,4-alpha-D-galacturonosyl)n+m + H2O = (1,4-alpha-D-galacturonosyl)n + (1,4-alpha-D-galacturonosyl)m.. Functionally, involved in maceration and soft-rotting of plant tissue. Hydrolyzes the 1,4-alpha glycosidic bonds of de-esterified pectate in the smooth region of the plant cell wall. This is Endopolygalacturonase B (pgaB) from Aspergillus oryzae (strain ATCC 42149 / RIB 40) (Yellow koji mold).